We begin with the raw amino-acid sequence, 112 residues long: Colipase (112 aa).

The N-terminal stretch at 1–17 is a signal peptide; sequence MEKVLALLLVTLTVAYA. Residues 18–22 constitute a propeptide, enterostatin, activation peptide; it reads VPDPR. Disulfide bonds link cysteine 34-cysteine 45, cysteine 40-cysteine 56, cysteine 44-cysteine 78, cysteine 66-cysteine 86, and cysteine 80-cysteine 104.

This sequence belongs to the colipase family. In terms of assembly, forms a 1:1 stoichiometric complex with pancreatic lipase. In terms of tissue distribution, expressed by the pancreas.

It localises to the secreted. Its function is as follows. Colipase is a cofactor of pancreatic lipase. It allows the lipase to anchor itself to the lipid-water interface. Without colipase the enzyme is washed off by bile salts, which have an inhibitory effect on the lipase. Functionally, enterostatin has a biological activity as a satiety signal. The protein is Colipase (CLPS) of Sus scrofa (Pig).